A 460-amino-acid polypeptide reads, in one-letter code: uncharacterized protein (460 aa).

The tat-type signal signal peptide spans 1–33 (MKESNSRREFLSQSGKMVTAAALFGTSVPLAHA).

This sequence belongs to the metallo-dependent hydrolases superfamily. Exported by the Tat system. The position of the signal peptide cleavage has not been experimentally proven. Can also be exported by the Sec system.

This is an uncharacterized protein from Escherichia coli (strain K12).